The chain runs to 300 residues: Probable alpha-L-glutamate ligase (300 aa).

The region spanning 104–287 (LQLLARQGID…IAGKMISWIE (184 aa)) is the ATP-grasp domain. Residues Lys141, 178–179 (EY), Asp187, and 211–213 (RSN) each bind ATP. The Mg(2+) site is built by Asp248, Glu260, and Asn262. Positions 248, 260, and 262 each coordinate Mn(2+).

Belongs to the RimK family. It depends on Mg(2+) as a cofactor. Mn(2+) is required as a cofactor.

The polypeptide is Probable alpha-L-glutamate ligase (Enterobacter sp. (strain 638)).